The chain runs to 413 residues: E3 ubiquitin-protein ligase makorin (413 aa).

2 C3H1-type zinc fingers span residues 2–29 and 30–57; these read PRHE…HDVA and TRNE…HTRP. A disordered region spans residues 61 to 85; that stretch reads ELPSCSTPQTSQNQQNLQNSGQRVR. Residues 66–82 are compositionally biased toward low complexity; it reads STPQTSQNQQNLQNSGQ. The C3H1-type 3 zinc finger occupies 138-167; that stretch reads QAQLMMCPYHQKSGDCNRQDMDCPFAHGNY. The segment at 213–267 adopts an RING-type zinc-finger fold; that stretch reads CGICMENIFEKNLRFGILNGCQHCFCLDCIRQWRSKDQENVELATKTVRSCPECR. The C3H1-type 4 zinc-finger motif lies at 296 to 327; it reads NTKRKICKYYSNERSRGACPFGNKCFYKHQLP.

As to quaternary structure, component of a complex at least containing lep-2, lin-28 and the long non-coding RNA lep-5, which mediates the degradation of lin-28. Expressed in seam, tail tip, and other hypodermal cells, head and tail neurons, the pharynx, intestine and the developing hermaphrodite somatic gonad. Not expressed in body wall muscle cells.

It localises to the cytoplasm. The enzyme catalyses S-ubiquitinyl-[E2 ubiquitin-conjugating enzyme]-L-cysteine + [acceptor protein]-L-lysine = [E2 ubiquitin-conjugating enzyme]-L-cysteine + N(6)-ubiquitinyl-[acceptor protein]-L-lysine.. The protein operates within protein modification; protein ubiquitination. Its function is as follows. E3 ubiquitin ligase which catalyzes the covalent attachment of ubiquitin moieties onto substrate proteins. Promotes the larval to adult transition by binding to the long non-coding RNA lep-5 to target the heterochronic protein lin-28 for degradation by the proteasome. This association and degradation of lin-28 also controls the timing of the sexual differentiation of individual neurons in males including the AIM, AWA, ADF, ASJ and CEM neurons. Plays a role in governing the developmental timing of male tail tip morphogenesis. Plays a role in two aspects of male mating behavior: response to hermaphrodite contact and vulva location. May play a role in the detection of preferred food sources. The polypeptide is E3 ubiquitin-protein ligase makorin (Caenorhabditis elegans).